Reading from the N-terminus, the 349-residue chain is N-acetyltaurine hydrolase (349 aa).

A divalent metal cation contacts are provided by H26, H28, E169, H201, H230, and D298.

The protein belongs to the metallo-dependent hydrolases superfamily. Phosphotriesterase family. Requires a divalent metal cation as cofactor.

The protein resides in the cytoplasm. Its subcellular location is the cytosol. The catalysed reaction is N-acetyltaurine + H2O = taurine + acetate. It carries out the reaction N-propanoyltaurine + H2O = propanoate + taurine. The enzyme catalyses N-acetyl-L-methionine + H2O = L-methionine + acetate. It catalyses the reaction N-acetyl-L-isoleucine + H2O = L-isoleucine + acetate. The catalysed reaction is N-acetyl-L-leucine + H2O = L-leucine + acetate. It carries out the reaction N-acetyl-L-valine + H2O = L-valine + acetate. N-acetyltaurine hydrolase that catalyzes the hydrolysis of N-acetyltaurine into taurine and acetate. PTER also acts on other N-acetyl amino acids (Met, Ile, Leu, Val) and N-propionyltaurine, but at lower rates. The chain is N-acetyltaurine hydrolase (pter) from Salmo salar (Atlantic salmon).